The primary structure comprises 98 residues: Co-chaperonin GroES (98 aa).

The protein belongs to the GroES chaperonin family. As to quaternary structure, heptamer of 7 subunits arranged in a ring. Interacts with the chaperonin GroEL.

It localises to the cytoplasm. Functionally, together with the chaperonin GroEL, plays an essential role in assisting protein folding. The GroEL-GroES system forms a nano-cage that allows encapsulation of the non-native substrate proteins and provides a physical environment optimized to promote and accelerate protein folding. GroES binds to the apical surface of the GroEL ring, thereby capping the opening of the GroEL channel. The polypeptide is Co-chaperonin GroES (Bartonella bacilliformis (strain ATCC 35685 / KC583 / Herrer 020/F12,63)).